Consider the following 674-residue polypeptide: DNA ligase (674 aa).

NAD(+) is bound by residues D34 to D38, S83 to L84, and E114. K116 acts as the N6-AMP-lysine intermediate in catalysis. Positions 137, 174, 290, and 314 each coordinate NAD(+). Positions 405, 408, 424, and 429 each coordinate Zn(2+). Residues Q587–F674 form the BRCT domain.

The protein belongs to the NAD-dependent DNA ligase family. LigA subfamily. The cofactor is Mg(2+). Requires Mn(2+) as cofactor.

It catalyses the reaction NAD(+) + (deoxyribonucleotide)n-3'-hydroxyl + 5'-phospho-(deoxyribonucleotide)m = (deoxyribonucleotide)n+m + AMP + beta-nicotinamide D-nucleotide.. DNA ligase that catalyzes the formation of phosphodiester linkages between 5'-phosphoryl and 3'-hydroxyl groups in double-stranded DNA using NAD as a coenzyme and as the energy source for the reaction. It is essential for DNA replication and repair of damaged DNA. The protein is DNA ligase of Endomicrobium trichonymphae.